Here is a 246-residue protein sequence, read N- to C-terminus: tRNA pseudouridine synthase A (246 aa).

Aspartate 53 acts as the Nucleophile in catalysis. Tyrosine 112 is a substrate binding site.

The protein belongs to the tRNA pseudouridine synthase TruA family. In terms of assembly, homodimer.

It catalyses the reaction uridine(38/39/40) in tRNA = pseudouridine(38/39/40) in tRNA. Formation of pseudouridine at positions 38, 39 and 40 in the anticodon stem and loop of transfer RNAs. This Anaplasma phagocytophilum (strain HZ) protein is tRNA pseudouridine synthase A.